Reading from the N-terminus, the 370-residue chain is DNA primase large subunit PriL (370 aa).

Cysteine 230, cysteine 301, cysteine 310, and cysteine 317 together coordinate [4Fe-4S] cluster. Positions 337–370 (EGEEAQGKEQGKEKDDGKEKENGKESEVKKKKEK) are disordered.

Belongs to the eukaryotic-type primase large subunit family. Heterodimer of a small subunit (PriS) and a large subunit (PriL). [4Fe-4S] cluster serves as cofactor.

Functionally, regulatory subunit of DNA primase, an RNA polymerase that catalyzes the synthesis of short RNA molecules used as primers for DNA polymerase during DNA replication. Stabilizes and modulates the activity of the small subunit, increasing the rate of DNA synthesis, and conferring RNA synthesis capability. The DNA polymerase activity may enable DNA primase to also catalyze primer extension after primer synthesis. May also play a role in DNA repair. The sequence is that of DNA primase large subunit PriL from Methanosarcina mazei (strain ATCC BAA-159 / DSM 3647 / Goe1 / Go1 / JCM 11833 / OCM 88) (Methanosarcina frisia).